The primary structure comprises 493 residues: Ketol-acid reductoisomerase (NADP(+)) (493 aa).

Residues Leu-14–Ser-208 form the KARI N-terminal Rossmann domain. NADP(+) is bound by residues Cys-45–Gln-48, Arg-68, Arg-76, Ser-78, and Asp-108–Gln-110. His-132 is an active-site residue. Gly-158 is a binding site for NADP(+). KARI C-terminal knotted domains lie at Ser-209 to Ala-345 and Asp-346 to Met-486. Mg(2+)-binding residues include Asp-217, Glu-221, Glu-390, and Glu-394. Ser-415 lines the substrate pocket.

Belongs to the ketol-acid reductoisomerase family. The cofactor is Mg(2+).

The enzyme catalyses (2R)-2,3-dihydroxy-3-methylbutanoate + NADP(+) = (2S)-2-acetolactate + NADPH + H(+). It carries out the reaction (2R,3R)-2,3-dihydroxy-3-methylpentanoate + NADP(+) = (S)-2-ethyl-2-hydroxy-3-oxobutanoate + NADPH + H(+). The protein operates within amino-acid biosynthesis; L-isoleucine biosynthesis; L-isoleucine from 2-oxobutanoate: step 2/4. Its pathway is amino-acid biosynthesis; L-valine biosynthesis; L-valine from pyruvate: step 2/4. Functionally, involved in the biosynthesis of branched-chain amino acids (BCAA). Catalyzes an alkyl-migration followed by a ketol-acid reduction of (S)-2-acetolactate (S2AL) to yield (R)-2,3-dihydroxy-isovalerate. In the isomerase reaction, S2AL is rearranged via a Mg-dependent methyl migration to produce 3-hydroxy-3-methyl-2-ketobutyrate (HMKB). In the reductase reaction, this 2-ketoacid undergoes a metal-dependent reduction by NADPH to yield (R)-2,3-dihydroxy-isovalerate. In Actinobacillus succinogenes (strain ATCC 55618 / DSM 22257 / CCUG 43843 / 130Z), this protein is Ketol-acid reductoisomerase (NADP(+)).